We begin with the raw amino-acid sequence, 561 residues long: Putative transport protein YbjL (561 aa).

Helical transmembrane passes span 8–28 (LLNG…LCLG), 32–52 (LGSV…LLGQ), 66–86 (FMLF…SIFF), 94–114 (MLAL…GKLF), and 158–178 (NLSL…IVGA). RCK C-terminal domains lie at 200–288 (RGLD…SFRN) and 292–373 (VFDR…RIGF). 5 consecutive transmembrane segments (helical) span residues 383–403 (LLAF…TFQF), 406–426 (FSFG…LGFL), 447–467 (FGLM…ISNG), 475–495 (MLIA…LFGA), and 540–560 (AIAN…WPGL).

This sequence belongs to the AAE transporter (TC 2.A.81) family. YbjL subfamily.

The protein localises to the cell membrane. This chain is Putative transport protein YbjL, found in Salmonella dublin (strain CT_02021853).